An 88-amino-acid chain; its full sequence is ATP synthase subunit c 2 (88 aa).

The next 2 helical transmembrane spans lie at 4–24 (FSWVMITAGFGMAIGSLGTGI) and 53–73 (IGLAMIESLAIYVFVVAMIIL).

This sequence belongs to the ATPase C chain family. In terms of assembly, F-type ATPases have 2 components, F(1) - the catalytic core - and F(0) - the membrane proton channel. F(1) has five subunits: alpha(3), beta(3), gamma(1), delta(1), epsilon(1). F(0) has three main subunits: a(1), b(2) and c(10-14). The alpha and beta chains form an alternating ring which encloses part of the gamma chain. F(1) is attached to F(0) by a central stalk formed by the gamma and epsilon chains, while a peripheral stalk is formed by the delta and b chains.

The protein resides in the cell inner membrane. Its function is as follows. F(1)F(0) ATP synthase produces ATP from ADP in the presence of a proton or sodium gradient. F-type ATPases consist of two structural domains, F(1) containing the extramembraneous catalytic core and F(0) containing the membrane proton channel, linked together by a central stalk and a peripheral stalk. During catalysis, ATP synthesis in the catalytic domain of F(1) is coupled via a rotary mechanism of the central stalk subunits to proton translocation. Functionally, key component of the F(0) channel; it plays a direct role in translocation across the membrane. A homomeric c-ring of between 10-14 subunits forms the central stalk rotor element with the F(1) delta and epsilon subunits. The polypeptide is ATP synthase subunit c 2 (Syntrophotalea carbinolica (strain DSM 2380 / NBRC 103641 / GraBd1) (Pelobacter carbinolicus)).